Reading from the N-terminus, the 223-residue chain is Deoxyribose-phosphate aldolase (223 aa).

D89 (proton donor/acceptor) is an active-site residue. Catalysis depends on K152, which acts as the Schiff-base intermediate with acetaldehyde. The Proton donor/acceptor role is filled by K181.

It belongs to the DeoC/FbaB aldolase family. DeoC type 1 subfamily.

Its subcellular location is the cytoplasm. The enzyme catalyses 2-deoxy-D-ribose 5-phosphate = D-glyceraldehyde 3-phosphate + acetaldehyde. It functions in the pathway carbohydrate degradation; 2-deoxy-D-ribose 1-phosphate degradation; D-glyceraldehyde 3-phosphate and acetaldehyde from 2-deoxy-alpha-D-ribose 1-phosphate: step 2/2. Functionally, catalyzes a reversible aldol reaction between acetaldehyde and D-glyceraldehyde 3-phosphate to generate 2-deoxy-D-ribose 5-phosphate. The protein is Deoxyribose-phosphate aldolase of Bacillus cytotoxicus (strain DSM 22905 / CIP 110041 / 391-98 / NVH 391-98).